An 83-amino-acid polypeptide reads, in one-letter code: Keratin-associated protein 21-2 (83 aa).

As to quaternary structure, interacts with hair keratins.

Functionally, in the hair cortex, hair keratin intermediate filaments are embedded in an interfilamentous matrix, consisting of hair keratin-associated proteins (KRTAP), which are essential for the formation of a rigid and resistant hair shaft through their extensive disulfide bond cross-linking with abundant cysteine residues of hair keratins. The matrix proteins include the high-sulfur and high-glycine-tyrosine keratins. The chain is Keratin-associated protein 21-2 (KRTAP21-2) from Homo sapiens (Human).